The sequence spans 156 residues: MSRRHRAEKREINPDPKFGDLVVTKFMNAIMLHGKKSVAESIVYGAFDAVQSKLKQEPVAVFHSALDNIAPHVEVRSRRVGGATYQVPVDVRPERRQALAIRWLIAAARKRNETTMVDRLCGELMDAANNRGSAVKKREDTHKMADANRAFSHYRW.

It belongs to the universal ribosomal protein uS7 family. Part of the 30S ribosomal subunit. Contacts proteins S9 and S11.

Its function is as follows. One of the primary rRNA binding proteins, it binds directly to 16S rRNA where it nucleates assembly of the head domain of the 30S subunit. Is located at the subunit interface close to the decoding center, probably blocks exit of the E-site tRNA. This Rhizobium meliloti (strain 1021) (Ensifer meliloti) protein is Small ribosomal subunit protein uS7.